A 244-amino-acid chain; its full sequence is Phosphoadenosine 5'-phosphosulfate reductase (244 aa).

The active-site Nucleophile; cysteine thiosulfonate intermediate is Cys-239.

It belongs to the PAPS reductase family. CysH subfamily.

The protein localises to the cytoplasm. The enzyme catalyses [thioredoxin]-disulfide + sulfite + adenosine 3',5'-bisphosphate + 2 H(+) = [thioredoxin]-dithiol + 3'-phosphoadenylyl sulfate. It participates in sulfur metabolism; hydrogen sulfide biosynthesis; sulfite from sulfate: step 3/3. Catalyzes the formation of sulfite from phosphoadenosine 5'-phosphosulfate (PAPS) using thioredoxin as an electron donor. The polypeptide is Phosphoadenosine 5'-phosphosulfate reductase (Yersinia pseudotuberculosis serotype O:1b (strain IP 31758)).